The chain runs to 391 residues: DNA replication and repair protein RecF (391 aa).

ATP is bound at residue glycine 30–threonine 37.

It belongs to the RecF family.

It localises to the cytoplasm. In terms of biological role, the RecF protein is involved in DNA metabolism; it is required for DNA replication and normal SOS inducibility. RecF binds preferentially to single-stranded, linear DNA. It also seems to bind ATP. In Kineococcus radiotolerans (strain ATCC BAA-149 / DSM 14245 / SRS30216), this protein is DNA replication and repair protein RecF.